We begin with the raw amino-acid sequence, 148 residues long: UPF0260 protein ECA2365 (148 aa).

It belongs to the UPF0260 family.

In Pectobacterium atrosepticum (strain SCRI 1043 / ATCC BAA-672) (Erwinia carotovora subsp. atroseptica), this protein is UPF0260 protein ECA2365.